The chain runs to 521 residues: Bifunctional purine biosynthesis protein PurH (521 aa).

The 145-residue stretch at 1 to 145 folds into the MGS-like domain; sequence MIKQALISVS…KNHKDVIVIC (145 aa).

The protein belongs to the PurH family.

The catalysed reaction is (6R)-10-formyltetrahydrofolate + 5-amino-1-(5-phospho-beta-D-ribosyl)imidazole-4-carboxamide = 5-formamido-1-(5-phospho-D-ribosyl)imidazole-4-carboxamide + (6S)-5,6,7,8-tetrahydrofolate. It catalyses the reaction IMP + H2O = 5-formamido-1-(5-phospho-D-ribosyl)imidazole-4-carboxamide. The protein operates within purine metabolism; IMP biosynthesis via de novo pathway; 5-formamido-1-(5-phospho-D-ribosyl)imidazole-4-carboxamide from 5-amino-1-(5-phospho-D-ribosyl)imidazole-4-carboxamide (10-formyl THF route): step 1/1. It functions in the pathway purine metabolism; IMP biosynthesis via de novo pathway; IMP from 5-formamido-1-(5-phospho-D-ribosyl)imidazole-4-carboxamide: step 1/1. The chain is Bifunctional purine biosynthesis protein PurH from Janthinobacterium sp. (strain Marseille) (Minibacterium massiliensis).